A 685-amino-acid polypeptide reads, in one-letter code: Dammaradiene synthase (685 aa).

PFTB repeat units follow at residues 82–123 (MDKM…RLLN) and 265–308 (IREA…DPVV). Asp-400 acts as the Proton donor in catalysis. PFTB repeat units follow at residues 424–465 (ITRC…KAMV) and 621–672 (IGHG…ARYR).

It belongs to the terpene cyclase/mutase family.

The catalysed reaction is squalene = dammara-20,24-diene. Squalene cyclase producing the tetracyclic triterpene dammaradiene. This is Dammaradiene synthase (DCD) from Dryopteris crassirhizoma (Thick stemmed wood fern).